The following is an 837-amino-acid chain: Endo-1,4-beta-xylanase Z (837 aa).

A signal peptide spans 1–28 (MSRKLFSVLLVGLMLMTSLLVTISSTSA). Residues 299–420 (TRIEAEDYDG…PVNIDWFTFG (122 aa)) enclose the CBM6 domain. Residues 424 to 492 (SSTGLGDLNG…ILRIITEFPG (69 aa)) form the Dockerin domain. Residues 512–833 (TISGNALRDY…KPAYNAIKEA (322 aa)) enclose the GH10 domain. The Proton donor role is filled by E645. Residue E754 is the Nucleophile of the active site. Cysteines 783 and 789 form a disulfide.

Belongs to the glycosyl hydrolase 10 (cellulase F) family.

The enzyme catalyses Endohydrolysis of (1-&gt;4)-beta-D-xylosidic linkages in xylans.. This is Endo-1,4-beta-xylanase Z (xynZ) from Acetivibrio thermocellus (strain ATCC 27405 / DSM 1237 / JCM 9322 / NBRC 103400 / NCIMB 10682 / NRRL B-4536 / VPI 7372) (Clostridium thermocellum).